Consider the following 66-residue polypeptide: Large ribosomal subunit protein uL29 (66 aa).

The protein belongs to the universal ribosomal protein uL29 family.

This is Large ribosomal subunit protein uL29 from Bacillus mycoides (strain KBAB4) (Bacillus weihenstephanensis).